Reading from the N-terminus, the 276-residue chain is Large ribosomal subunit protein uL2 (276 aa).

Disordered stretches follow at residues 38-59 (FQKS…GGHK) and 225-276 (VMNP…RHKR). Polar residues predominate over residues 39-49 (QKSGRNNNGHI). Over residues 50–59 (TTRHKGGGHK) the composition is skewed to basic residues.

Belongs to the universal ribosomal protein uL2 family. Part of the 50S ribosomal subunit. Forms a bridge to the 30S subunit in the 70S ribosome.

One of the primary rRNA binding proteins. Required for association of the 30S and 50S subunits to form the 70S ribosome, for tRNA binding and peptide bond formation. It has been suggested to have peptidyltransferase activity; this is somewhat controversial. Makes several contacts with the 16S rRNA in the 70S ribosome. This Cupriavidus necator (strain ATCC 17699 / DSM 428 / KCTC 22496 / NCIMB 10442 / H16 / Stanier 337) (Ralstonia eutropha) protein is Large ribosomal subunit protein uL2.